The following is a 2427-amino-acid chain: Interferon-induced very large GTPase 1 (2427 aa).

The region spanning Asp-1485–Gln-1726 is the VLIG-type G domain. GTP-binding positions include Gly-1495–Ser-1502, Asp-1548–Gly-1551, and Thr-1625–Asp-1628.

This sequence belongs to the TRAFAC class dynamin-like GTPase superfamily. Very large inducible GTPase (VLIG) family. As to expression, widely expressed. Expressed at low basal level in lung, heart, thymus and spleen; at still lower level in liver, ovary, kidney and brain. Expressed at very weak level in testis. Undetectable in embryo.

The protein resides in the cytoplasm. It localises to the cytosol. The protein localises to the nucleus. This chain is Interferon-induced very large GTPase 1 (Gvin1), found in Mus musculus (Mouse).